The following is a 204-amino-acid chain: High frequency lysogenization protein HflD homolog (204 aa).

This sequence belongs to the HflD family.

It localises to the cytoplasm. The protein resides in the cell inner membrane. This Aeromonas hydrophila subsp. hydrophila (strain ATCC 7966 / DSM 30187 / BCRC 13018 / CCUG 14551 / JCM 1027 / KCTC 2358 / NCIMB 9240 / NCTC 8049) protein is High frequency lysogenization protein HflD homolog.